Consider the following 259-residue polypeptide: HTH-type quorum sensing-dependent transcriptional regulator VjbR (259 aa).

A C12-HSL binding region spans residues 76–179 (KNYFAIDPVF…AGIIHGTVCG (104 aa)). The HTH luxR-type domain maps to 183 to 248 (ANSVASLLTP…SAVATALSLG (66 aa)). The H-T-H motif DNA-binding region spans 207 to 226 (DGEIAEILSIARWTVVTYLQ).

Its function is as follows. Transcriptional regulator involved in the global control of Brucella gene expression. Mediates the effects of the quorum sensing autoinducer C12-HSL (N-dodecanoyl-homoserine lactone) on a large and diverse number of genes. In Brucella suis biovar 1 (strain 1330), this protein is HTH-type quorum sensing-dependent transcriptional regulator VjbR (vjbR).